A 391-amino-acid chain; its full sequence is Phosphoglycerate kinase (391 aa).

Substrate contacts are provided by residues 21–23 (DLN), Arg-36, 59–62 (HLGR), Arg-113, and Arg-146. ATP is bound by residues Lys-197, Glu-319, and 345 to 348 (GGDT).

Belongs to the phosphoglycerate kinase family. As to quaternary structure, monomer.

It is found in the cytoplasm. It catalyses the reaction (2R)-3-phosphoglycerate + ATP = (2R)-3-phospho-glyceroyl phosphate + ADP. It participates in carbohydrate degradation; glycolysis; pyruvate from D-glyceraldehyde 3-phosphate: step 2/5. This chain is Phosphoglycerate kinase, found in Shewanella sp. (strain ANA-3).